The following is a 343-amino-acid chain: MSSPDTPVCASPQQMEMYNSHFYTCALFFNLLIAFTSMTLIIMAIRKLLTESIINTSTRMFLIVGLLCCSLHQTAYIVLRVQVIFQILFKLDQPCKLYYKAYDCKYVTFSLVAGNTGMIFIQSAMTIDRILTTVFTNLWPKLKYWPGVILSSFMIGCNFTNVQFIFWNDPLTDYVPTCGQFPPKSVGRFQKFLEIALYMSLAHMVINVIILYINVVQDRRQRLVSTHDQSQSFDVNQRFQSRVALKSTQAIFFLSMSQFLSCFLYTIFTKLYLTLQPDMTPLQSGLTLALTYTTPYACIAIPSLIMVTLTFIRNQRHRSINALRSQTETGDQYMQKIKKIWDK.

The Extracellular portion of the chain corresponds to 1–24 (MSSPDTPVCASPQQMEMYNSHFYT). Residues 25–45 (CALFFNLLIAFTSMTLIIMAI) traverse the membrane as a helical segment. Topologically, residues 46–60 (RKLLTESIINTSTRM) are cytoplasmic. A helical transmembrane segment spans residues 61-81 (FLIVGLLCCSLHQTAYIVLRV). Topologically, residues 82-106 (QVIFQILFKLDQPCKLYYKAYDCKY) are extracellular. A helical transmembrane segment spans residues 107 to 127 (VTFSLVAGNTGMIFIQSAMTI). The Cytoplasmic portion of the chain corresponds to 128 to 146 (DRILTTVFTNLWPKLKYWP). The chain crosses the membrane as a helical span at residues 147-167 (GVILSSFMIGCNFTNVQFIFW). At 168–192 (NDPLTDYVPTCGQFPPKSVGRFQKF) the chain is on the extracellular side. A helical membrane pass occupies residues 193–213 (LEIALYMSLAHMVINVIILYI). The Cytoplasmic segment spans residues 214–247 (NVVQDRRQRLVSTHDQSQSFDVNQRFQSRVALKS). The helical transmembrane segment at 248 to 268 (TQAIFFLSMSQFLSCFLYTIF) threads the bilayer. The Extracellular segment spans residues 269–291 (TKLYLTLQPDMTPLQSGLTLALT). A helical transmembrane segment spans residues 292-312 (YTTPYACIAIPSLIMVTLTFI). Residues 313-343 (RNQRHRSINALRSQTETGDQYMQKIKKIWDK) are Cytoplasmic-facing.

This sequence belongs to the nematode receptor-like protein sra family.

It localises to the membrane. Its function is as follows. A G protein-coupled receptor required for olfactory imprinting a requisite in ordorant response such as benzaldehyde and isoamylalcohol. The protein is Serpentine receptor class alpha-11 of Caenorhabditis briggsae.